The sequence spans 142 residues: Small ribosomal subunit protein bS6 (142 aa).

The span at 110 to 133 (NKKPSHAKEKHEKTEHTHSHHLEE) shows a compositional bias: basic and acidic residues. The tract at residues 110 to 142 (NKKPSHAKEKHEKTEHTHSHHLEEAESVGSHSE) is disordered.

The protein belongs to the bacterial ribosomal protein bS6 family.

In terms of biological role, binds together with bS18 to 16S ribosomal RNA. The polypeptide is Small ribosomal subunit protein bS6 (Helicobacter pylori (strain HPAG1)).